Reading from the N-terminus, the 150-residue chain is Endoribonuclease YbeY (150 aa).

3 residues coordinate Zn(2+): His-108, His-112, and His-118.

The protein belongs to the endoribonuclease YbeY family. The cofactor is Zn(2+).

Its subcellular location is the cytoplasm. Its function is as follows. Single strand-specific metallo-endoribonuclease involved in late-stage 70S ribosome quality control and in maturation of the 3' terminus of the 16S rRNA. In Methylococcus capsulatus (strain ATCC 33009 / NCIMB 11132 / Bath), this protein is Endoribonuclease YbeY.